The primary structure comprises 269 residues: Tryptophan synthase alpha chain (269 aa).

Catalysis depends on proton acceptor residues Glu-49 and Asp-60.

This sequence belongs to the TrpA family. Tetramer of two alpha and two beta chains.

The catalysed reaction is (1S,2R)-1-C-(indol-3-yl)glycerol 3-phosphate + L-serine = D-glyceraldehyde 3-phosphate + L-tryptophan + H2O. The protein operates within amino-acid biosynthesis; L-tryptophan biosynthesis; L-tryptophan from chorismate: step 5/5. The alpha subunit is responsible for the aldol cleavage of indoleglycerol phosphate to indole and glyceraldehyde 3-phosphate. This Delftia acidovorans (strain DSM 14801 / SPH-1) protein is Tryptophan synthase alpha chain.